The chain runs to 450 residues: Gluconate permease (450 aa).

A run of 12 helical transmembrane segments spans residues 6–26 (HDAYLLLDALVTIIGLIVLIT), 30–50 (VHPFIALIIAAGFLGLTSGMP), 60–80 (DGFGGVLGFVGVILALGTMLG), 116–136 (VGIPLFFEIGFILLIPLVFIV), 142–162 (VSLIKIGIPLLAGLSAVHGLV), 183–203 (ILYGLIVALPTAAIAGPLFGA), 233–253 (FGVTLATVLLPVFLMLLKTFA), 269–289 (MIGHPISALLLALLVALYTFG), 312–332 (AIVMIIGAGGGFKQMLVASGV), 338–358 (HLAVNAQISPILLAWLVAAVI), 366–386 (TVATITGAGIVVPVIDLIPGV), and 430–450 (AMETILSVVGLVFILLLSLVL).

It belongs to the GntP permease family.

It is found in the cell inner membrane. It functions in the pathway carbohydrate acid metabolism; D-gluconate degradation. This is Gluconate permease (gnuT) from Pseudomonas aeruginosa (strain ATCC 15692 / DSM 22644 / CIP 104116 / JCM 14847 / LMG 12228 / 1C / PRS 101 / PAO1).